Reading from the N-terminus, the 68-residue chain is Small integral membrane protein 10-like protein 3 (68 aa).

This is Small integral membrane protein 10-like protein 3 from Homo sapiens (Human).